Consider the following 355-residue polypeptide: DNA polymerase IV (355 aa).

Positions 7-188 (IIHIDMDCFY…LPVRKLFGVG (182 aa)) constitute a UmuC domain. Residues D11 and D106 each coordinate Mg(2+). The active site involves E107.

Belongs to the DNA polymerase type-Y family. Monomer. The cofactor is Mg(2+).

Its subcellular location is the cytoplasm. It carries out the reaction DNA(n) + a 2'-deoxyribonucleoside 5'-triphosphate = DNA(n+1) + diphosphate. Its function is as follows. Poorly processive, error-prone DNA polymerase involved in untargeted mutagenesis. Copies undamaged DNA at stalled replication forks, which arise in vivo from mismatched or misaligned primer ends. These misaligned primers can be extended by PolIV. Exhibits no 3'-5' exonuclease (proofreading) activity. May be involved in translesional synthesis, in conjunction with the beta clamp from PolIII. In Legionella pneumophila (strain Corby), this protein is DNA polymerase IV.